The chain runs to 389 residues: Acyl-[acyl-carrier-protein] dehydrogenase MbtN (389 aa).

Belongs to the acyl-CoA dehydrogenase family. Requires FAD as cofactor.

It functions in the pathway siderophore biosynthesis; mycobactin biosynthesis. In terms of biological role, catalyzes the dehydrogenation at the alpha-beta position of ACP-bound acyl chains. This results in the introduction of a double bond in the lipidic chain, which is further transferred to the epsilon-amino group of lysine residue in the mycobactin core by MbtK. The polypeptide is Acyl-[acyl-carrier-protein] dehydrogenase MbtN (mbtN) (Mycobacterium sp. (strain MCS)).